The primary structure comprises 430 residues: Enolase (430 aa).

Residue Gln-165 coordinates (2R)-2-phosphoglycerate. The Proton donor role is filled by Glu-207. Residues Asp-244, Glu-287, and Asp-314 each coordinate Mg(2+). Residues Lys-339, Arg-368, Ser-369, and Lys-390 each contribute to the (2R)-2-phosphoglycerate site. The active-site Proton acceptor is the Lys-339.

This sequence belongs to the enolase family. As to quaternary structure, component of the RNA degradosome, a multiprotein complex involved in RNA processing and mRNA degradation. Requires Mg(2+) as cofactor.

It localises to the cytoplasm. Its subcellular location is the secreted. The protein resides in the cell surface. It catalyses the reaction (2R)-2-phosphoglycerate = phosphoenolpyruvate + H2O. The protein operates within carbohydrate degradation; glycolysis; pyruvate from D-glyceraldehyde 3-phosphate: step 4/5. Catalyzes the reversible conversion of 2-phosphoglycerate (2-PG) into phosphoenolpyruvate (PEP). It is essential for the degradation of carbohydrates via glycolysis. In Xanthomonas oryzae pv. oryzae (strain MAFF 311018), this protein is Enolase.